The sequence spans 561 residues: Cytosolic purine 5'-nucleotidase (561 aa).

The active-site Nucleophile is aspartate 52. GMP contacts are provided by aspartate 52 and aspartate 54. IMP is bound by residues aspartate 52 and aspartate 54. Residues aspartate 52 and aspartate 54 each coordinate Mg(2+). The active-site Proton donor is the aspartate 54. Residue arginine 144 coordinates (2R)-2,3-bisphosphoglycerate. Residues arginine 144 and asparagine 154 each contribute to the ATP site. DATP is bound by residues arginine 144 and asparagine 154. Residue asparagine 154 coordinates adenosine. Asparagine 154 is a binding site for P(1),P(4)-bis(5'-adenosyl) tetraphosphate. The GMP site is built by arginine 202, aspartate 206, lysine 215, threonine 249, and asparagine 250. IMP contacts are provided by arginine 202, aspartate 206, lysine 215, threonine 249, asparagine 250, serine 251, and lysine 292. Lysine 292 contributes to the GMP binding site. Aspartate 351 contributes to the Mg(2+) binding site. Position 362 (lysine 362) interacts with (2R)-2,3-bisphosphoglycerate. Lysine 362 contributes to the P(1),P(4)-bis(5'-adenosyl) tetraphosphate binding site. The residue at position 418 (serine 418) is a Phosphoserine. 2 residues coordinate adenosine: methionine 436 and glutamine 453. ATP is bound by residues glutamine 453 and arginine 456. DATP-binding residues include glutamine 453 and arginine 456. A P(1),P(4)-bis(5'-adenosyl) tetraphosphate-binding site is contributed by glutamine 453. Residue tyrosine 457 coordinates (2R)-2,3-bisphosphoglycerate. Position 457 (tyrosine 457) interacts with P(1),P(4)-bis(5'-adenosyl) tetraphosphate. A phosphoserine mark is found at serine 502, serine 511, and serine 527. Residues 538–561 (PLAPQEITHCHDEDDDEEEEEEEE) are disordered. The segment at 548–561 (HDEDDDEEEEEEEE) is required for tetramer assembly. Acidic residues predominate over residues 550–561 (EDDDEEEEEEEE).

This sequence belongs to the 5'(3')-deoxyribonucleotidase family. As to quaternary structure, homotetramer. Mg(2+) is required as a cofactor. In terms of tissue distribution, widely expressed.

It is found in the cytoplasm. It localises to the cytosol. The catalysed reaction is a ribonucleoside 5'-phosphate + H2O = a ribonucleoside + phosphate. It catalyses the reaction a 2'-deoxyribonucleoside + a ribonucleoside 5'-phosphate = a ribonucleoside + a 2'-deoxyribonucleoside 5'-phosphate. The enzyme catalyses IMP + H2O = inosine + phosphate. It carries out the reaction GMP + H2O = guanosine + phosphate. The catalysed reaction is dIMP + H2O = 2'-deoxyinosine + phosphate. It catalyses the reaction dGMP + H2O = 2'-deoxyguanosine + phosphate. The enzyme catalyses XMP + H2O = xanthosine + phosphate. It carries out the reaction inosine + GMP = guanosine + IMP. The catalysed reaction is dGMP + inosine = 2'-deoxyguanosine + IMP. It catalyses the reaction dIMP + inosine = 2'-deoxyinosine + IMP. The enzyme catalyses inosine + UMP = uridine + IMP. It carries out the reaction inosine + CMP = cytidine + IMP. The catalysed reaction is inosine + AMP = IMP + adenosine. Allosterically activated by various compounds including ATP, 2,3-BPG/2,3-Bisphosphoglyceric acid and Ap4A/P1,P4-bis(5'-adenosyl) tetraphosphate. Binding of an allosteric activator is a prerequisiste to magnesium and substrate binding. Inhibited by inorganic phosphate. Broad specificity cytosolic 5'-nucleotidase that catalyzes the dephosphorylation of 6-hydroxypurine nucleoside 5'-monophosphates. In addition, possesses a phosphotransferase activity by which it can transfer a phosphate from a donor nucleoside monophosphate to an acceptor nucleoside, preferably inosine, deoxyinosine and guanosine. Has the highest activities for IMP and GMP followed by dIMP, dGMP and XMP. Could also catalyze the transfer of phosphates from pyrimidine monophosphates but with lower efficiency. Through these activities regulates the purine nucleoside/nucleotide pools within the cell. In Homo sapiens (Human), this protein is Cytosolic purine 5'-nucleotidase.